We begin with the raw amino-acid sequence, 471 residues long: Collagenase 3 (471 aa).

Positions 1-19 are cleaved as a signal peptide; sequence MHPGVLAAFLFLSWTHCRA. Residues 20–103 constitute a propeptide, activation peptide; that stretch reads LPLPSGGDED…PRCGVPDVGE (84 aa). A Cysteine switch motif is present at residues 94–101; the sequence is PRCGVPDV. C96 provides a ligand contact to Zn(2+). Residue N117 is glycosylated (N-linked (GlcNAc...) asparagine). Residue D128 coordinates Ca(2+). The N-linked (GlcNAc...) asparagine glycan is linked to N152. D162 lines the Ca(2+) pocket. Positions 172 and 174 each coordinate Zn(2+). Positions 176–246 are interaction with TIMP2; that stretch reads YPFDGPSGLL…GALMFPIYTY (71 aa). Ca(2+)-binding residues include D179, G180, S182, and L184. Residue H187 coordinates Zn(2+). The Ca(2+) site is built by N194, G196, and D198. Residue H200 coordinates Zn(2+). Ca(2+)-binding residues include D202, D203, and E205. H222 contributes to the Zn(2+) binding site. E223 is a catalytic residue. Residues H226, H232, and M240 each contribute to the Zn(2+) site. Positions 263 to 284 are disordered; that stretch reads QSLYGPGDEDPNPKHPKTPDKC. The tract at residues 268 to 471 is interaction with collagen; sequence PGDEDPNPKH…VMPANSILWC (204 aa). Residues 273–284 show a composition bias toward basic and acidic residues; it reads PNPKHPKTPDKC. Hemopexin repeat units follow at residues 281 to 330, 331 to 377, 379 to 427, and 428 to 471; these read PDKC…WPEL, PNRI…GLPK, VKKI…FPGI, and GDKV…ILWC. The cysteines at positions 284 and 471 are disulfide-linked. Residues D291, I293, D335, and A337 each coordinate Ca(2+). Y366 is subject to Phosphotyrosine; by PKDCC. S383, A385, D432, and V434 together coordinate Ca(2+).

Belongs to the peptidase M10A family. Monomer. Interacts with TIMP1, TIMP2 and TIMP3. Binds (via the C-terminal region) to collagen. It depends on Ca(2+) as a cofactor. Zn(2+) is required as a cofactor. The proenzyme is activated by removal of the propeptide; this cleavage can be effected by other matrix metalloproteinases, such as MMP2, MMP3 and MMP14 and may involve several cleavage steps. Cleavage can also be autocatalytic, after partial maturation by another protease or after treatment with 4-aminophenylmercuric acetate (APMA) (in vitro). In terms of processing, N-glycosylated. Post-translationally, tyrosine phosphorylated by PKDCC/VLK. In terms of tissue distribution, detected in fetal cartilage and calvaria, in chondrocytes of hypertrophic cartilage in vertebrae and in the dorsal end of ribs undergoing ossification, as well as in osteoblasts and periosteal cells below the inner periosteal region of ossified ribs. Detected in chondrocytes from in joint cartilage that have been treated with TNF and IL1B, but not in untreated chondrocytes. Detected in T lymphocytes. Detected in breast carcinoma tissue.

The protein localises to the secreted. Its subcellular location is the extracellular space. It is found in the extracellular matrix. With respect to regulation, inhibited by TIMP1, TIMP2 and TIMP3. Inhibited by acetohydroxamic acid and other zinc chelators. In terms of biological role, plays a role in the degradation of extracellular matrix proteins including fibrillar collagen, fibronectin, TNC and ACAN. Cleaves triple helical collagens, including type I, type II and type III collagen, but has the highest activity with soluble type II collagen. Can also degrade collagen type IV, type XIV and type X. May also function by activating or degrading key regulatory proteins, such as TGFB1 and CCN2. Plays a role in wound healing, tissue remodeling, cartilage degradation, bone development, bone mineralization and ossification. Required for normal embryonic bone development and ossification. Plays a role in the healing of bone fractures via endochondral ossification. Plays a role in wound healing, probably by a mechanism that involves proteolytic activation of TGFB1 and degradation of CCN2. Plays a role in keratinocyte migration during wound healing. May play a role in cell migration and in tumor cell invasion. The chain is Collagenase 3 (MMP13) from Homo sapiens (Human).